The sequence spans 163 residues: Lipoprotein signal peptidase (163 aa).

3 helical membrane-spanning segments follow: residues 11–31 (ILIA…IATT), 63–83 (KMTF…YFFI), and 88–108 (YNLF…GNFI). Catalysis depends on residues D118 and D136. Residues 131–151 (IFNIADSSLTIGVILIIIALL) form a helical membrane-spanning segment.

This sequence belongs to the peptidase A8 family.

It is found in the cell membrane. The catalysed reaction is Release of signal peptides from bacterial membrane prolipoproteins. Hydrolyzes -Xaa-Yaa-Zaa-|-(S,diacylglyceryl)Cys-, in which Xaa is hydrophobic (preferably Leu), and Yaa (Ala or Ser) and Zaa (Gly or Ala) have small, neutral side chains.. The protein operates within protein modification; lipoprotein biosynthesis (signal peptide cleavage). In terms of biological role, this protein specifically catalyzes the removal of signal peptides from prolipoproteins. The chain is Lipoprotein signal peptidase from Staphylococcus aureus.